The chain runs to 1713 residues: Cell wall protein AWA1 (1713 aa).

The N-terminal stretch at 1-23 is a signal peptide; that stretch reads MFNRFNKLQAALALVLYSQSALG. N-linked (GlcNAc...) asparagine glycosylation occurs at asparagine 34. Disordered regions lie at residues 80–117, 256–327, and 359–939; these read IAPSTSSSEVSSSITSSGSSVSGSSSITSSGSSVSSSS, TSTT…AESI, and SSGI…STAS. The segment covering 256–275 has biased composition (low complexity); sequence TSTTSDTYISSSSPSQVTSS. Composition is skewed to polar residues over residues 276–327 and 359–368; these read AEPT…AESI and SSGISSSVEP. Positions 374-939 are enriched in low complexity; the sequence is PSSDESISST…QSTSSASTAS (566 aa). N-linked (GlcNAc...) asparagine glycans are attached at residues asparagine 1133, asparagine 1241, and asparagine 1278. Residues 1582–1603 form a disordered region; the sequence is KTVTSEAPKETSETSETSAAPK. Residue alanine 1692 is the site of GPI-anchor amidated alanine attachment. A propeptide spans 1693-1713 (removed in mature form); sequence AGLNANTLNALVGIFVLAFFN.

This sequence belongs to the SRP1/TIP1 family. Post-translationally, the GPI-anchor is attached to the protein in the endoplasmic reticulum and serves to target the protein to the cell surface. There, the glucosamine-inositol phospholipid moiety is cleaved off and the GPI-modified mannoprotein is covalently attached via its lipidless GPI glycan remnant to the 1,6-beta-glucan of the outer cell wall layer.

The protein localises to the secreted. It is found in the cell wall. The protein resides in the membrane. In terms of biological role, involved in cell wall organization and biosynthesis. Confers cell surface hydrophobicity (CSH). The sequence is that of Cell wall protein AWA1 (AWA1) from Saccharomyces cerevisiae (strain Kyokai no. 7 / NBRC 101557) (Baker's yeast).